A 74-amino-acid polypeptide reads, in one-letter code: Exodeoxyribonuclease 7 small subunit (74 aa).

It belongs to the XseB family. As to quaternary structure, heterooligomer composed of large and small subunits.

It is found in the cytoplasm. The enzyme catalyses Exonucleolytic cleavage in either 5'- to 3'- or 3'- to 5'-direction to yield nucleoside 5'-phosphates.. In terms of biological role, bidirectionally degrades single-stranded DNA into large acid-insoluble oligonucleotides, which are then degraded further into small acid-soluble oligonucleotides. This is Exodeoxyribonuclease 7 small subunit from Neisseria meningitidis serogroup C / serotype 2a (strain ATCC 700532 / DSM 15464 / FAM18).